The sequence spans 157 residues: Ribosomal RNA large subunit methyltransferase H (157 aa).

S-adenosyl-L-methionine contacts are provided by residues L73, G105, and 124-129; that span reads LSRMTF.

This sequence belongs to the RNA methyltransferase RlmH family. Homodimer.

The protein resides in the cytoplasm. It catalyses the reaction pseudouridine(1915) in 23S rRNA + S-adenosyl-L-methionine = N(3)-methylpseudouridine(1915) in 23S rRNA + S-adenosyl-L-homocysteine + H(+). Functionally, specifically methylates the pseudouridine at position 1915 (m3Psi1915) in 23S rRNA. This chain is Ribosomal RNA large subunit methyltransferase H, found in Porphyromonas gingivalis (strain ATCC 33277 / DSM 20709 / CIP 103683 / JCM 12257 / NCTC 11834 / 2561).